The following is a 642-amino-acid chain: Probable glutamate--tRNA ligase, cytoplasmic (642 aa).

Residue 152-154 participates in L-glutamate binding; the sequence is RFP. Residues 157–166 carry the 'HIGH' region motif; the sequence is PNGRLHIGHA. Histidine 162 lines the ATP pocket. L-glutamate contacts are provided by residues aspartate 188, 326–330, and arginine 344; that span reads YDFAC. ATP-binding positions include glutamate 347 and 382-386; that span reads VLSKR. The 'KMSKS' region motif lies at 382–386; the sequence is VLSKR.

Belongs to the class-I aminoacyl-tRNA synthetase family. Glutamate--tRNA ligase type 2 subfamily.

The protein localises to the cytoplasm. The catalysed reaction is tRNA(Glu) + L-glutamate + ATP = L-glutamyl-tRNA(Glu) + AMP + diphosphate. This chain is Probable glutamate--tRNA ligase, cytoplasmic, found in Encephalitozoon cuniculi (strain GB-M1) (Microsporidian parasite).